The sequence spans 238 residues: 7-cyano-7-deazaguanine synthase (238 aa).

14–24 serves as a coordination point for ATP; that stretch reads FSGGQDSTTCL. Zn(2+) contacts are provided by Cys-195, Cys-204, Cys-207, and Cys-210.

This sequence belongs to the QueC family. It depends on Zn(2+) as a cofactor.

The catalysed reaction is 7-carboxy-7-deazaguanine + NH4(+) + ATP = 7-cyano-7-deazaguanine + ADP + phosphate + H2O + H(+). It functions in the pathway purine metabolism; 7-cyano-7-deazaguanine biosynthesis. In terms of biological role, catalyzes the ATP-dependent conversion of 7-carboxy-7-deazaguanine (CDG) to 7-cyano-7-deazaguanine (preQ(0)). The polypeptide is 7-cyano-7-deazaguanine synthase (Baumannia cicadellinicola subsp. Homalodisca coagulata).